A 233-amino-acid chain; its full sequence is MLNTPRICVVVIGKTLEEFLSQLEAAQTAVDFVELRIDYLEQINPNWVRIIKNHTHKKAILCCRARADGGKFLGTPEAQQEILQAGNDLGFDYLDIDLPVANKISIHEKKAKIIISYHNFLHTPPITELNFLLENMRLFNPDVFKFATKSEQYEDVKTLFKLLINKKNNENMIVLGMGEQGKIIRLLSPLLGGYLTFSSINGAISAPGQIDFKTMQDFYQRFYKISSPLKGED.

3-dehydroquinate contacts are provided by residues 34–36 and Arg64; that span reads ELR. Residue His118 is the Proton donor/acceptor of the active site. The active-site Schiff-base intermediate with substrate is Lys145. 3-dehydroquinate-binding residues include Arg185, Ser205, and Gln209.

This sequence belongs to the type-I 3-dehydroquinase family. In terms of assembly, homodimer.

It catalyses the reaction 3-dehydroquinate = 3-dehydroshikimate + H2O. Its pathway is metabolic intermediate biosynthesis; chorismate biosynthesis; chorismate from D-erythrose 4-phosphate and phosphoenolpyruvate: step 3/7. Functionally, involved in the third step of the chorismate pathway, which leads to the biosynthesis of aromatic amino acids. Catalyzes the cis-dehydration of 3-dehydroquinate (DHQ) and introduces the first double bond of the aromatic ring to yield 3-dehydroshikimate. The chain is 3-dehydroquinate dehydratase from Coxiella burnetii (strain CbuG_Q212) (Coxiella burnetii (strain Q212)).